The sequence spans 275 residues: uncharacterized protein (275 aa).

Belongs to the MtfA family.

This is an uncharacterized protein from Synechocystis sp. (strain ATCC 27184 / PCC 6803 / Kazusa).